The sequence spans 252 residues: Glucosamine-6-phosphate deaminase (252 aa).

Catalysis depends on D67, which acts as the Proton acceptor; for enolization step. Residue N137 is the For ring-opening step of the active site. Catalysis depends on H139, which acts as the Proton acceptor; for ring-opening step. Catalysis depends on E144, which acts as the For ring-opening step.

This sequence belongs to the glucosamine/galactosamine-6-phosphate isomerase family. NagB subfamily.

It carries out the reaction alpha-D-glucosamine 6-phosphate + H2O = beta-D-fructose 6-phosphate + NH4(+). It functions in the pathway amino-sugar metabolism; N-acetylneuraminate degradation; D-fructose 6-phosphate from N-acetylneuraminate: step 5/5. Catalyzes the reversible isomerization-deamination of glucosamine 6-phosphate (GlcN6P) to form fructose 6-phosphate (Fru6P) and ammonium ion. This Staphylococcus aureus (strain Mu3 / ATCC 700698) protein is Glucosamine-6-phosphate deaminase.